The sequence spans 349 residues: Holliday junction branch migration complex subunit RuvB (349 aa).

A large ATPase domain (RuvB-L) region spans residues 1-183 (MTDPSRLVTP…FGIPIRLNFY (183 aa)). Residues Leu-22, Arg-23, Gly-64, Lys-67, Thr-68, Thr-69, 130 to 132 (EDF), Arg-173, Tyr-183, and Arg-220 each bind ATP. Thr-68 is a Mg(2+) binding site. The small ATPAse domain (RuvB-S) stretch occupies residues 184–254 (TIEELESIVT…IADHALGALE (71 aa)). Residues 257–349 (SAGLDAMDRR…GLFGDTGDQE (93 aa)) form a head domain (RuvB-H) region. Positions 293, 312, and 317 each coordinate DNA.

This sequence belongs to the RuvB family. As to quaternary structure, homohexamer. Forms an RuvA(8)-RuvB(12)-Holliday junction (HJ) complex. HJ DNA is sandwiched between 2 RuvA tetramers; dsDNA enters through RuvA and exits via RuvB. An RuvB hexamer assembles on each DNA strand where it exits the tetramer. Each RuvB hexamer is contacted by two RuvA subunits (via domain III) on 2 adjacent RuvB subunits; this complex drives branch migration. In the full resolvosome a probable DNA-RuvA(4)-RuvB(12)-RuvC(2) complex forms which resolves the HJ.

The protein localises to the cytoplasm. The catalysed reaction is ATP + H2O = ADP + phosphate + H(+). The RuvA-RuvB-RuvC complex processes Holliday junction (HJ) DNA during genetic recombination and DNA repair, while the RuvA-RuvB complex plays an important role in the rescue of blocked DNA replication forks via replication fork reversal (RFR). RuvA specifically binds to HJ cruciform DNA, conferring on it an open structure. The RuvB hexamer acts as an ATP-dependent pump, pulling dsDNA into and through the RuvAB complex. RuvB forms 2 homohexamers on either side of HJ DNA bound by 1 or 2 RuvA tetramers; 4 subunits per hexamer contact DNA at a time. Coordinated motions by a converter formed by DNA-disengaged RuvB subunits stimulates ATP hydrolysis and nucleotide exchange. Immobilization of the converter enables RuvB to convert the ATP-contained energy into a lever motion, pulling 2 nucleotides of DNA out of the RuvA tetramer per ATP hydrolyzed, thus driving DNA branch migration. The RuvB motors rotate together with the DNA substrate, which together with the progressing nucleotide cycle form the mechanistic basis for DNA recombination by continuous HJ branch migration. Branch migration allows RuvC to scan DNA until it finds its consensus sequence, where it cleaves and resolves cruciform DNA. This is Holliday junction branch migration complex subunit RuvB from Rhodopseudomonas palustris (strain TIE-1).